The sequence spans 1578 residues: Pentafunctional AROM polypeptide (1578 aa).

The 3-dehydroquinate synthase stretch occupies residues 1 to 384; it reads MAEPTKIKIL…YEPKASVVPN (384 aa). Residues 44–46, 81–84, 114–116, and aspartate 119 each bind NAD(+); these read DTN, EVSK, and GGV. 7-phospho-2-dehydro-3-deoxy-D-arabino-heptonate is bound at residue arginine 130. 139–140 is a binding site for NAD(+); that stretch reads TT. The 7-phospho-2-dehydro-3-deoxy-D-arabino-heptonate site is built by aspartate 146 and lysine 152. Residue lysine 161 participates in NAD(+) binding. 7-phospho-2-dehydro-3-deoxy-D-arabino-heptonate is bound at residue asparagine 162. Residues 179-182 and asparagine 190 each bind NAD(+); that span reads FLET. Glutamate 194 serves as a coordination point for Zn(2+). 7-phospho-2-dehydro-3-deoxy-D-arabino-heptonate is bound by residues 194–197 and lysine 250; that span reads EVIK. Glutamate 260 serves as the catalytic Proton acceptor; for 3-dehydroquinate synthase activity. 7-phospho-2-dehydro-3-deoxy-D-arabino-heptonate-binding positions include 264 to 268 and histidine 271; that span reads RNLLN. Histidine 271 contacts Zn(2+). Catalysis depends on histidine 275, which acts as the Proton acceptor; for 3-dehydroquinate synthase activity. 7-phospho-2-dehydro-3-deoxy-D-arabino-heptonate-binding residues include histidine 287 and lysine 356. Residue histidine 287 participates in Zn(2+) binding. Residues 397 to 842 are EPSP synthase; it reads VHPGVEPASN…WDTLRQKFSA (446 aa). Cysteine 824 acts as the For EPSP synthase activity in catalysis. The shikimate kinase stretch occupies residues 864-1055; the sequence is TASVFIIGMR…KRKKHSFFVS (192 aa). 871–878 is an ATP binding site; that stretch reads GMRGAGKT. A 3-dehydroquinase region spans residues 1056 to 1276; sequence LTLPDLRTAG…AAPGQLSATE (221 aa). Histidine 1179 acts as the Proton acceptor; for 3-dehydroquinate dehydratase activity in catalysis. Lysine 1207 serves as the catalytic Schiff-base intermediate with substrate; for 3-dehydroquinate dehydratase activity. Positions 1289–1578 are shikimate dehydrogenase; it reads QKKFAVFGTP…EDARAAVLSS (290 aa).

It in the N-terminal section; belongs to the sugar phosphate cyclases superfamily. Dehydroquinate synthase family. In the 2nd section; belongs to the EPSP synthase family. The protein in the 3rd section; belongs to the shikimate kinase family. This sequence in the 4th section; belongs to the type-I 3-dehydroquinase family. It in the C-terminal section; belongs to the shikimate dehydrogenase family. As to quaternary structure, homodimer. The cofactor is Zn(2+).

Its subcellular location is the cytoplasm. It carries out the reaction 7-phospho-2-dehydro-3-deoxy-D-arabino-heptonate = 3-dehydroquinate + phosphate. The enzyme catalyses 3-dehydroquinate = 3-dehydroshikimate + H2O. The catalysed reaction is shikimate + NADP(+) = 3-dehydroshikimate + NADPH + H(+). It catalyses the reaction shikimate + ATP = 3-phosphoshikimate + ADP + H(+). It carries out the reaction 3-phosphoshikimate + phosphoenolpyruvate = 5-O-(1-carboxyvinyl)-3-phosphoshikimate + phosphate. It participates in metabolic intermediate biosynthesis; chorismate biosynthesis; chorismate from D-erythrose 4-phosphate and phosphoenolpyruvate: step 2/7. The protein operates within metabolic intermediate biosynthesis; chorismate biosynthesis; chorismate from D-erythrose 4-phosphate and phosphoenolpyruvate: step 3/7. It functions in the pathway metabolic intermediate biosynthesis; chorismate biosynthesis; chorismate from D-erythrose 4-phosphate and phosphoenolpyruvate: step 4/7. Its pathway is metabolic intermediate biosynthesis; chorismate biosynthesis; chorismate from D-erythrose 4-phosphate and phosphoenolpyruvate: step 5/7. It participates in metabolic intermediate biosynthesis; chorismate biosynthesis; chorismate from D-erythrose 4-phosphate and phosphoenolpyruvate: step 6/7. Functionally, the AROM polypeptide catalyzes 5 consecutive enzymatic reactions in prechorismate polyaromatic amino acid biosynthesis. The sequence is that of Pentafunctional AROM polypeptide from Aspergillus flavus (strain ATCC 200026 / FGSC A1120 / IAM 13836 / NRRL 3357 / JCM 12722 / SRRC 167).